A 158-amino-acid chain; its full sequence is ATP synthase subunit beta, mitochondrial (158 aa).

Belongs to the ATPase alpha/beta chains family. In terms of assembly, F-type ATPases have 2 components, CF(1) - the catalytic core - and CF(0) - the membrane proton channel. CF(1) has five subunits: alpha(3), beta(3), gamma(1), delta(1), epsilon(1). CF(0) has three main subunits: a, b and c.

The protein localises to the mitochondrion. Its subcellular location is the mitochondrion inner membrane. The enzyme catalyses ATP + H2O + 4 H(+)(in) = ADP + phosphate + 5 H(+)(out). Mitochondrial membrane ATP synthase (F(1)F(0) ATP synthase or Complex V) produces ATP from ADP in the presence of a proton gradient across the membrane which is generated by electron transport complexes of the respiratory chain. F-type ATPases consist of two structural domains, F(1) - containing the extramembraneous catalytic core, and F(0) - containing the membrane proton channel, linked together by a central stalk and a peripheral stalk. During catalysis, ATP synthesis in the catalytic domain of F(1) is coupled via a rotary mechanism of the central stalk subunits to proton translocation. Subunits alpha and beta form the catalytic core in F(1). Rotation of the central stalk against the surrounding alpha(3)beta(3) subunits leads to hydrolysis of ATP in three separate catalytic sites on the beta subunits. The polypeptide is ATP synthase subunit beta, mitochondrial (Schizaphis graminum (Green bug aphid)).